The following is a 200-amino-acid chain: Urease accessory protein UreG (200 aa).

11–18 (GPVGSGKT) lines the GTP pocket.

Belongs to the SIMIBI class G3E GTPase family. UreG subfamily. In terms of assembly, homodimer. UreD, UreF and UreG form a complex that acts as a GTP-hydrolysis-dependent molecular chaperone, activating the urease apoprotein by helping to assemble the nickel containing metallocenter of UreC. The UreE protein probably delivers the nickel.

It localises to the cytoplasm. Its function is as follows. Facilitates the functional incorporation of the urease nickel metallocenter. This process requires GTP hydrolysis, probably effectuated by UreG. The polypeptide is Urease accessory protein UreG (Thermosynechococcus vestitus (strain NIES-2133 / IAM M-273 / BP-1)).